Consider the following 261-residue polypeptide: Acidic leucine-rich nuclear phosphoprotein 32 family member B (261 aa).

LRR repeat units lie at residues proline 16–glutamate 40, asparagine 43–proline 64, lysine 65–leucine 87, and asparagine 89–lysine 110. N6-acetyllysine is present on lysine 86. Residues cysteine 123–glutamate 161 enclose the LRRCT domain. The interval aspartate 149–aspartate 261 is disordered. A compositionally biased stretch (acidic residues) spans aspartate 157–glutamate 243. Serine 158 bears the Phosphoserine mark. The span at serine 244–threonine 254 shows a compositional bias: basic and acidic residues. A Nuclear localization signal motif is present at residues lysine 249–arginine 252. Threonine 254 carries the post-translational modification Phosphothreonine.

It belongs to the ANP32 family. As to quaternary structure, interacts with histones H3 and H4. Interacts with KLF5; this interaction induces promoter region-specific histone incorporation and inhibition of histone acetylation by ANP32B. Some Glu residues are glycylated by TTLL8; a modification that generates a side chains of glycine on the gamma-carboxyl groups of specific glutamate residues. In terms of processing, directly cleaved by caspase-3/CASP3.

The protein localises to the nucleus. Its function is as follows. Multifunctional protein that is involved in the regulation of many processes including cell proliferation, apoptosis, cell cycle progression or transcription. Regulates the proliferation of neuronal stem cells, differentiation of leukemic cells and progression from G1 to S phase of the cell cycle. As negative regulator of caspase-3-dependent apoptosis, may act as an antagonist of ANP32A in regulating tissue homeostasis. Exhibits histone chaperone properties, able to recruit histones to certain promoters, thus regulating the transcription of specific genes. Also plays an essential role in the nucleocytoplasmic transport of specific mRNAs via the uncommon nuclear mRNA export receptor XPO1/CRM1. Participates in the regulation of adequate adaptive immune responses by acting on mRNA expression and cell proliferation. The polypeptide is Acidic leucine-rich nuclear phosphoprotein 32 family member B (ANP32B) (Bos taurus (Bovine)).